The following is a 147-amino-acid chain: Large ribosomal subunit protein uL13 (147 aa).

Belongs to the universal ribosomal protein uL13 family. As to quaternary structure, part of the 50S ribosomal subunit.

Functionally, this protein is one of the early assembly proteins of the 50S ribosomal subunit, although it is not seen to bind rRNA by itself. It is important during the early stages of 50S assembly. This chain is Large ribosomal subunit protein uL13, found in Rhodococcus jostii (strain RHA1).